The following is an 82-amino-acid chain: Large ribosomal subunit protein bL27 (82 aa).

Positions 1–26 are disordered; the sequence is MAHKKGQGASRNGRDSESKRLGMKVG.

It belongs to the bacterial ribosomal protein bL27 family.

This is Large ribosomal subunit protein bL27 from Chlamydia felis (strain Fe/C-56) (Chlamydophila felis).